The following is a 271-amino-acid chain: Putative pirin-like protein At3g59260 (271 aa).

The protein belongs to the pirin family.

Its subcellular location is the nucleus. This chain is Putative pirin-like protein At3g59260, found in Arabidopsis thaliana (Mouse-ear cress).